A 409-amino-acid chain; its full sequence is Tyrosine--tRNA ligase (409 aa).

The short motif at 54–63 (PTAPDIHLGH) is the 'HIGH' region element. A 'KMSKS' region motif is present at residues 238–242 (KMSKS). Lysine 241 is a binding site for ATP. The 61-residue stretch at 347 to 407 (QGILRILREA…GKRKFARVKL (61 aa)) folds into the S4 RNA-binding domain.

The protein belongs to the class-I aminoacyl-tRNA synthetase family. TyrS type 2 subfamily. As to quaternary structure, homodimer.

The protein resides in the cytoplasm. It carries out the reaction tRNA(Tyr) + L-tyrosine + ATP = L-tyrosyl-tRNA(Tyr) + AMP + diphosphate + H(+). In terms of biological role, catalyzes the attachment of tyrosine to tRNA(Tyr) in a two-step reaction: tyrosine is first activated by ATP to form Tyr-AMP and then transferred to the acceptor end of tRNA(Tyr). This chain is Tyrosine--tRNA ligase, found in Bordetella parapertussis (strain 12822 / ATCC BAA-587 / NCTC 13253).